A 227-amino-acid chain; its full sequence is Fibrillarin-like rRNA/tRNA 2'-O-methyltransferase (227 aa).

Residues 86–87 (TT), 105–106 (EF), 130–131 (DA), and 150–153 (DVAQ) each bind S-adenosyl-L-methionine.

Belongs to the methyltransferase superfamily. Fibrillarin family. As to quaternary structure, interacts with nop5. Component of box C/D small ribonucleoprotein (sRNP) particles that contain rpl7ae, FlpA and nop5, plus a guide RNA. These sRNP particles form homodimers, giving rise to an asymmetric holoenzyme.

In terms of biological role, involved in pre-rRNA and tRNA processing. Utilizes the methyl donor S-adenosyl-L-methionine to catalyze the site-specific 2'-hydroxyl methylation of ribose moieties in rRNA and tRNA. Site specificity is provided by a guide RNA that base pairs with the substrate. Methylation occurs at a characteristic distance from the sequence involved in base pairing with the guide RNA. The chain is Fibrillarin-like rRNA/tRNA 2'-O-methyltransferase from Pyrococcus furiosus (strain ATCC 43587 / DSM 3638 / JCM 8422 / Vc1).